The sequence spans 550 residues: Aldehyde dehydrogenase family 3 member I1, chloroplastic (550 aa).

The transit peptide at 1 to 59 (MTKLLEINHIQTLCFAKGFSPARLNVATSPFRISRRGGGGYCSNACIPYRLKFTCYATL) directs the protein to the chloroplast. Residue 259 to 264 (GGARVA) coordinates NAD(+). E281 (proton acceptor) is an active-site residue. Residue C316 is the Nucleophile of the active site.

Belongs to the aldehyde dehydrogenase family. Homodimer and homomultimer.

The protein localises to the plastid. The protein resides in the chloroplast. It catalyses the reaction an aldehyde + NAD(+) + H2O = a carboxylate + NADH + 2 H(+). With respect to regulation, thiol-based regulation. Inactivation after dimerization under oxidizing conditions. Its function is as follows. Involved in oxidative stress tolerance by detoxifying reactive aldehydes derived from lipid peroxidation. Medium- to long-chain saturated aldehydes are preferred substrates, while the short-chain aldehyde propanal is a weak substrate. Can use both NAD(+) and NADP(+), but the coenzyme preference is substrate dependent. The protein is Aldehyde dehydrogenase family 3 member I1, chloroplastic (ALDH3I1) of Arabidopsis thaliana (Mouse-ear cress).